The sequence spans 926 residues: BTB/POZ domain-containing protein KCTD19 (926 aa).

The BTB 1 domain occupies 18 to 72; it reads NVGGWHFSVPRSKLSQFPDSLLWKEASALTSSESQRLFIDRDGSTFRHVHYYLYT. A Phosphoserine modification is found at S270. The BTB 2 domain maps to 398 to 485; that stretch reads IKVYVGSHWY…YHIPSLSEAL (88 aa). The disordered stretch occupies residues 673-751; that stretch reads GSEAASQPST…PAPEQPLPEA (79 aa). Positions 730–742 are enriched in basic and acidic residues; it reads DWSKQRTKERESP.

As to quaternary structure, identified in a complex with ZNF541, HDAC1 and HSPA2. Identified in a complex with ZNF541 and HDAC1. Identified in a complex with HDAC1, HDAC2, DNTTIP1 and ZNF541.

It localises to the nucleus. Its function is as follows. Transcription regulator which is essential for male fertility and for the completion of meiotic prophase in spermatocytes. Regulates progression of the pachytene stage of meiotic prophase and promotes the transcriptional activation activity ZNF541. Required for the organization of chromosomes during metaphase I. This chain is BTB/POZ domain-containing protein KCTD19 (KCTD19), found in Homo sapiens (Human).